The sequence spans 129 residues: Small ribosomal subunit protein uS11 (129 aa).

The protein belongs to the universal ribosomal protein uS11 family. In terms of assembly, part of the 30S ribosomal subunit. Interacts with proteins S7 and S18. Binds to IF-3.

In terms of biological role, located on the platform of the 30S subunit, it bridges several disparate RNA helices of the 16S rRNA. Forms part of the Shine-Dalgarno cleft in the 70S ribosome. The protein is Small ribosomal subunit protein uS11 of Jannaschia sp. (strain CCS1).